A 184-amino-acid polypeptide reads, in one-letter code: UPF0669 protein C6orf120 homolog (184 aa).

Residues 1 to 23 form the signal peptide; that stretch reads MAAPWTGALLLLLASQAVSSAQA. N-linked (GlcNAc...) asparagine glycosylation occurs at N47.

It belongs to the UPF0669 family.

The protein localises to the secreted. May be involved in induction of apoptosis in CD4(+) T-cells, but not CD8(+) T-cells or hepatocytes. The chain is UPF0669 protein C6orf120 homolog from Bos taurus (Bovine).